The following is a 549-amino-acid chain: Cytochrome c oxidase subunit 1 (549 aa).

The chain crosses the membrane as a helical span at residues 18–38; the sequence is LCYLLVAILSGFVGYVYSLFI. Ca(2+) is bound by residues glutamate 41 and glycine 46. A helical transmembrane segment spans residues 42–62; it reads LSLIGCGILFGDYQFYNVLIT. Histidine 64 contributes to the Fe(II)-heme a binding site. The next 5 membrane-spanning stretches (helical) occupy residues 66–86, 100–120, 148–168, 186–206, and 222–242; these read LIMVFAFIMPVMMGGLVNYFI, LNNMSFWMYLAGFGCVVNGFL, FVMFAVHLLGISSILNSINLL, LFIWAALITAILLIITLPVLA, and FYDVVGGGDLILFQHIFWFFG. Residue histidine 243 coordinates Cu cation. The 1'-histidyl-3'-tyrosine (His-Tyr) cross-link spans 243-247; the sequence is HPEVY. A run of 2 helical transmembrane segments spans residues 246-266 and 269-289; these read VYIILLPVFGLISTIVEVIGF and VFSTVAMIYSMILIAILGMFV. O2 is bound at residue tyrosine 247. Histidine 292 and histidine 293 together coordinate Cu cation. 2 consecutive transmembrane segments (helical) span residues 306-326 and 340-360; these read YFGGVSILIGLPTCVKLFNWI and VYFVIMFIFMFLIGAVTGLFL. The Mg(2+) site is built by histidine 370 and aspartate 371. A heme a3-binding site is contributed by histidine 378. 5 consecutive transmembrane segments (helical) span residues 379–399, 402–422, 460–480, 484–504, and 520–540; these read FHYVLSLGAVVGFFTGFIHFL, WLPIELYLFWMFYFISTLFIG, MLLLASLILFLCALFCVFLFW, LFFVSLFVFSLYCFFYFSTWL, and IVLDYLFLILCFCFVFFIFFW. Histidine 380 is a Fe(II)-heme a binding site.

Belongs to the heme-copper respiratory oxidase family. In terms of assembly, component of the cytochrome c oxidase (complex IV, CIV), a multisubunit enzyme composed of a catalytic core of 3 subunits and several supernumerary subunits. The complex exists as a monomer or a dimer and forms supercomplexes (SCs) in the inner mitochondrial membrane with ubiquinol-cytochrome c oxidoreductase (cytochrome b-c1 complex, complex III, CIII). It depends on heme as a cofactor. Cu cation is required as a cofactor.

The protein resides in the mitochondrion inner membrane. The catalysed reaction is 4 Fe(II)-[cytochrome c] + O2 + 8 H(+)(in) = 4 Fe(III)-[cytochrome c] + 2 H2O + 4 H(+)(out). Its pathway is energy metabolism; oxidative phosphorylation. Component of the cytochrome c oxidase, the last enzyme in the mitochondrial electron transport chain which drives oxidative phosphorylation. The respiratory chain contains 3 multisubunit complexes succinate dehydrogenase (complex II, CII), ubiquinol-cytochrome c oxidoreductase (cytochrome b-c1 complex, complex III, CIII) and cytochrome c oxidase (complex IV, CIV), that cooperate to transfer electrons derived from NADH and succinate to molecular oxygen, creating an electrochemical gradient over the inner membrane that drives transmembrane transport and the ATP synthase. Cytochrome c oxidase is the component of the respiratory chain that catalyzes the reduction of oxygen to water. Electrons originating from reduced cytochrome c in the intermembrane space (IMS) are transferred via the dinuclear copper A center (CU(A)) of subunit 2 and heme A of subunit 1 to the active site in subunit 1, a binuclear center (BNC) formed by heme A3 and copper B (CU(B)). The BNC reduces molecular oxygen to 2 water molecules using 4 electrons from cytochrome c in the IMS and 4 protons from the mitochondrial matrix. This chain is Cytochrome c oxidase subunit 1 (COI), found in Leishmania tarentolae (Sauroleishmania tarentolae).